A 150-amino-acid polypeptide reads, in one-letter code: D-aminoacyl-tRNA deacylase (150 aa).

Residues 138-139 (GP) carry the Gly-cisPro motif, important for rejection of L-amino acids motif.

The protein belongs to the DTD family. Homodimer.

It localises to the cytoplasm. It catalyses the reaction glycyl-tRNA(Ala) + H2O = tRNA(Ala) + glycine + H(+). The enzyme catalyses a D-aminoacyl-tRNA + H2O = a tRNA + a D-alpha-amino acid + H(+). In terms of biological role, an aminoacyl-tRNA editing enzyme that deacylates mischarged D-aminoacyl-tRNAs. Also deacylates mischarged glycyl-tRNA(Ala), protecting cells against glycine mischarging by AlaRS. Acts via tRNA-based rather than protein-based catalysis; rejects L-amino acids rather than detecting D-amino acids in the active site. By recycling D-aminoacyl-tRNA to D-amino acids and free tRNA molecules, this enzyme counteracts the toxicity associated with the formation of D-aminoacyl-tRNA entities in vivo and helps enforce protein L-homochirality. This chain is D-aminoacyl-tRNA deacylase, found in Chlorobium phaeobacteroides (strain DSM 266 / SMG 266 / 2430).